Consider the following 478-residue polypeptide: Sodium-coupled neutral amino acid transporter 5 (478 aa).

A disordered region spans residues 1–20; the sequence is MAISSAEGMELQDPKMNGAL. Topologically, residues 1-57 are cytoplasmic; that stretch reads MAISSAEGMELQDPKMNGALPGNAVEQEHEGFLPSHSPSPGRKPAQFMDFEGKTSFG. Residues 58–80 traverse the membrane as a helical segment; the sequence is MSVFNLSNAIMGSGILGLAYAMA. Residues 81–93 lie on the Extracellular side of the membrane; that stretch reads HTGILLFLALLLC. A helical membrane pass occupies residues 94 to 114; that stretch reads IALLSSYSIHLLLTCAGVVGI. The Cytoplasmic segment spans residues 115-131; sequence RAYEQLGQRALGPAGKV. Residues 132–152 traverse the membrane as a helical segment; sequence VVAAVICLHNVGAMSSYLFII. At 153 to 172 the chain is on the extracellular side; that stretch reads KSELPLVIATFLDMDPEGDW. The helical transmembrane segment at 173–193 threads the bilayer; it reads FLKGNLLIIIVSVLIILPLAL. The Cytoplasmic segment spans residues 194-198; the sequence is MRHLG. The helical transmembrane segment at 199–219 threads the bilayer; that stretch reads YLGYTSGLSLTCMLFFLISVI. The Extracellular segment spans residues 220–263; that stretch reads YKKFQLGCTVGHNGTAVESKSSPSLPIHGLNTSCEAQMFTADSQ. C227 and C253 are joined by a disulfide. Residue N232 is glycosylated (N-linked (GlcNAc...) asparagine). Residues 264 to 284 form a helical membrane-spanning segment; the sequence is MFYTVPIMAFAFVCHPEVLPI. Residues 285-301 lie on the Cytoplasmic side of the membrane; the sequence is YTELCRPSKRRMQAVAN. Residues 302 to 322 form a helical membrane-spanning segment; sequence VSIGAMFCMYGLTATFGYLTF. Residues 323-340 lie on the Extracellular side of the membrane; the sequence is YSSVEAEMLHMYSQHDLL. Residues 341–361 form a helical membrane-spanning segment; the sequence is ILCVRLAVLLAVTLTVPVVLF. Topologically, residues 362–382 are cytoplasmic; the sequence is PIRRALQQLLFPSKAFSWPRH. A helical membrane pass occupies residues 383 to 403; it reads VAIALILLVLVNVLVICVPTI. Residues 404–405 lie on the Extracellular side of the membrane; the sequence is RD. Residues 406 to 426 traverse the membrane as a helical segment; that stretch reads IFGVIGSTSAPSLIFILPSIF. Topologically, residues 427–445 are cytoplasmic; that stretch reads YLRIVPSEVEPLYSWPKIQ. A helical membrane pass occupies residues 446 to 466; the sequence is ALCFGVLGVLFMAISLGFMFA. Topologically, residues 467–478 are extracellular; it reads NWATGQSHVSGH.

The protein belongs to the amino acid/polyamine transporter 2 family.

Its subcellular location is the cell membrane. It catalyses the reaction L-serine(out) + Na(+)(out) + H(+)(in) = L-serine(in) + Na(+)(in) + H(+)(out). The enzyme catalyses L-alanine(out) + Na(+)(out) + H(+)(in) = L-alanine(in) + Na(+)(in) + H(+)(out). It carries out the reaction glycine(out) + Na(+)(out) + H(+)(in) = glycine(in) + Na(+)(in) + H(+)(out). The catalysed reaction is L-glutamine(out) + Na(+)(out) + H(+)(in) = L-glutamine(in) + Na(+)(in) + H(+)(out). It catalyses the reaction L-asparagine(out) + Na(+)(out) + H(+)(in) = L-asparagine(in) + Na(+)(in) + H(+)(out). The enzyme catalyses L-histidine(out) + Na(+)(out) + H(+)(in) = L-histidine(in) + Na(+)(in) + H(+)(out). It carries out the reaction L-cysteine(out) + Na(+)(out) + H(+)(in) = L-cysteine(in) + Na(+)(in) + H(+)(out). With respect to regulation, not inhibited by lithium. Partial allosteric regulation on ions sodium binding. Functionally, symporter that cotransports neutral amino acids and sodium ions, coupled to an H(+) antiporter activity. Releases L-glutamine and glycine from astroglial cells and may participate in the glutamate/GABA-glutamine cycle and the NMDA receptors activation. In addition contributes significantly to L-glutamine uptake in retina, namely in ganglion and Mueller cells and, therefore participates in the retinal glutamate-glutamine cycle. The transport activity is pH sensitive, Li(+) tolerant, bidirectional and associated with large uncoupled fluxes of protons. The transport is electroneutral coupled to the cotransport of 1 Na(+) and the antiport of 1 H(+). May have particular importance for modulation of net hepatic glutamine flux. This is Sodium-coupled neutral amino acid transporter 5 from Bos taurus (Bovine).